The chain runs to 253 residues: Imidazole glycerol phosphate synthase subunit HisF (253 aa).

Residues Asp11 and Asp130 contribute to the active site.

Belongs to the HisA/HisF family. Heterodimer of HisH and HisF.

It is found in the cytoplasm. The catalysed reaction is 5-[(5-phospho-1-deoxy-D-ribulos-1-ylimino)methylamino]-1-(5-phospho-beta-D-ribosyl)imidazole-4-carboxamide + L-glutamine = D-erythro-1-(imidazol-4-yl)glycerol 3-phosphate + 5-amino-1-(5-phospho-beta-D-ribosyl)imidazole-4-carboxamide + L-glutamate + H(+). The protein operates within amino-acid biosynthesis; L-histidine biosynthesis; L-histidine from 5-phospho-alpha-D-ribose 1-diphosphate: step 5/9. Functionally, IGPS catalyzes the conversion of PRFAR and glutamine to IGP, AICAR and glutamate. The HisF subunit catalyzes the cyclization activity that produces IGP and AICAR from PRFAR using the ammonia provided by the HisH subunit. This chain is Imidazole glycerol phosphate synthase subunit HisF, found in Clostridium botulinum (strain Langeland / NCTC 10281 / Type F).